A 155-amino-acid polypeptide reads, in one-letter code: Endoribonuclease YbeY (155 aa).

3 residues coordinate Zn(2+): H114, H118, and H124.

The protein belongs to the endoribonuclease YbeY family. Requires Zn(2+) as cofactor.

The protein localises to the cytoplasm. Its function is as follows. Single strand-specific metallo-endoribonuclease involved in late-stage 70S ribosome quality control and in maturation of the 3' terminus of the 16S rRNA. The protein is Endoribonuclease YbeY of Salmonella arizonae (strain ATCC BAA-731 / CDC346-86 / RSK2980).